The following is a 428-amino-acid chain: Nucleotidyltransferase MB21D2 (428 aa).

The segment at 366 to 389 is disordered; it reads QRRGSTTSIPSPQSDGGDPNQPDD. Residues 368–379 are compositionally biased toward polar residues; it reads RGSTTSIPSPQS. Phosphothreonine is present on threonine 372. Phosphoserine occurs at positions 373, 376, and 379.

It belongs to the mab-21 family.

Probable nucleotidyltransferase that catalyzes the formation of cyclic dinucleotide second messenger in response to some unknown stimulus. The polypeptide is Nucleotidyltransferase MB21D2 (Mus musculus (Mouse)).